We begin with the raw amino-acid sequence, 203 residues long: Large ribosomal subunit protein bL25 (203 aa).

It belongs to the bacterial ribosomal protein bL25 family. CTC subfamily. In terms of assembly, part of the 50S ribosomal subunit; part of the 5S rRNA/L5/L18/L25 subcomplex. Contacts the 5S rRNA. Binds to the 5S rRNA independently of L5 and L18.

Its function is as follows. This is one of the proteins that binds to the 5S RNA in the ribosome where it forms part of the central protuberance. This Rickettsia africae (strain ESF-5) protein is Large ribosomal subunit protein bL25.